The chain runs to 126 residues: Fluoride-specific ion channel FluC (126 aa).

A run of 4 helical transmembrane segments spans residues 7–24 (LWVS…YFLS), 35–55 (FPWG…LFLV), 69–89 (LLIA…AYES), and 98–118 (WGLF…AVLG). The Na(+) site is built by Gly-77 and Thr-80.

The protein belongs to the fluoride channel Fluc/FEX (TC 1.A.43) family.

Its subcellular location is the cell inner membrane. It catalyses the reaction fluoride(in) = fluoride(out). Na(+) is not transported, but it plays an essential structural role and its presence is essential for fluoride channel function. Fluoride-specific ion channel. Important for reducing fluoride concentration in the cell, thus reducing its toxicity. This chain is Fluoride-specific ion channel FluC, found in Koribacter versatilis (strain Ellin345).